The primary structure comprises 83 residues: Short neurotoxin 3FTx-Oxy3 (83 aa).

An N-terminal signal peptide occupies residues 1–21; sequence MKTLLLTLVVVTIVCLDLGYT. Cystine bridges form between cysteine 24/cysteine 45, cysteine 38/cysteine 62, cysteine 64/cysteine 75, and cysteine 76/cysteine 81.

Belongs to the three-finger toxin family. Short-chain subfamily. Type I alpha-neurotoxin sub-subfamily. Expressed by the venom gland.

It localises to the secreted. In terms of biological role, binds to muscle nicotinic acetylcholine receptor (nAChR) and inhibit acetylcholine from binding to the receptor, thereby impairing neuromuscular transmission. This is Short neurotoxin 3FTx-Oxy3 from Oxyuranus microlepidotus (Inland taipan).